The chain runs to 827 residues: Glycerol-3-phosphate acyltransferase (827 aa).

The HXXXXD motif signature appears at 325–330 (CHRSHM).

It belongs to the GPAT/DAPAT family.

The protein localises to the cell inner membrane. It carries out the reaction sn-glycerol 3-phosphate + an acyl-CoA = a 1-acyl-sn-glycero-3-phosphate + CoA. The protein operates within phospholipid metabolism; CDP-diacylglycerol biosynthesis; CDP-diacylglycerol from sn-glycerol 3-phosphate: step 1/3. The sequence is that of Glycerol-3-phosphate acyltransferase from Escherichia coli (strain SMS-3-5 / SECEC).